Reading from the N-terminus, the 166-residue chain is Disulfide bond formation protein B (166 aa).

Residues M1–L11 are Cytoplasmic-facing. Residues F12–Y28 traverse the membrane as a helical segment. Over L29–Y46 the chain is Periplasmic. C38 and C41 form a disulfide bridge. Residues A47–P63 form a helical membrane-spanning segment. The Cytoplasmic portion of the chain corresponds to G64–A70. Residues Y71–L87 traverse the membrane as a helical segment. At R88 to N143 the chain is on the periplasmic side. A disulfide bridge connects residues C102 and C129. The chain crosses the membrane as a helical span at residues W144–R162. Residues K163 to G166 are Cytoplasmic-facing.

This sequence belongs to the DsbB family.

It is found in the cell inner membrane. In terms of biological role, required for disulfide bond formation in some periplasmic proteins. Acts by oxidizing the DsbA protein. The chain is Disulfide bond formation protein B from Aromatoleum aromaticum (strain DSM 19018 / LMG 30748 / EbN1) (Azoarcus sp. (strain EbN1)).